The primary structure comprises 138 residues: Large ribosomal subunit protein uL16 (138 aa).

Residues 1–13 (MLQPKRRKYRKEQ) are compositionally biased toward basic residues. Positions 1-20 (MLQPKRRKYRKEQKGRNTGI) are disordered.

Belongs to the universal ribosomal protein uL16 family. Part of the 50S ribosomal subunit.

In terms of biological role, binds 23S rRNA and is also seen to make contacts with the A and possibly P site tRNAs. This is Large ribosomal subunit protein uL16 from Burkholderia mallei (strain NCTC 10247).